Reading from the N-terminus, the 152-residue chain is Nucleoside diphosphate kinase A (152 aa).

K12, F60, R88, and T94 together coordinate ATP. K100 participates in a covalent cross-link: Glycyl lysine isopeptide (Lys-Gly) (interchain with G-Cter in ubiquitin). 2 residues coordinate ATP: R105 and N115. H118 (pros-phosphohistidine intermediate) is an active-site residue. Phosphoserine occurs at positions 120 and 122. Residue K124 is modified to N6-acetyllysine. At S125 the chain carries Phosphoserine.

Belongs to the NDK family. Hexamer of two different chains: An and B (A6, A5B, A4B2, A3B3, A2B4, AB5, B6). Interacts with PRUNE1. Component of the SET complex, composed of at least ANP32A, APEX1, HMGB2, NME1, SET and TREX1. Within this complex, interacts directly with SET. Also interacts with TREX1, but only following translocation to the nucleus. The cofactor is Mg(2+).

Its subcellular location is the cytoplasm. The protein localises to the nucleus. It catalyses the reaction a 2'-deoxyribonucleoside 5'-diphosphate + ATP = a 2'-deoxyribonucleoside 5'-triphosphate + ADP. It carries out the reaction a ribonucleoside 5'-diphosphate + ATP = a ribonucleoside 5'-triphosphate + ADP. With respect to regulation, autophosphorylation at His-118 increases serine/threonine protein kinase activity of the enzyme. Interaction with the SET complex inhibits exonuclease activity. In terms of biological role, major role in the synthesis of nucleoside triphosphates other than ATP. The ATP gamma phosphate is transferred to the NDP beta phosphate via a ping-pong mechanism, using a phosphorylated active-site intermediate. Possesses nucleoside-diphosphate kinase, serine/threonine-specific protein kinase, geranyl and farnesyl pyrophosphate kinase, histidine protein kinase and 3'-5' exonuclease activities. Involved in cell proliferation, differentiation and development, signal transduction, G protein-coupled receptor endocytosis, and gene expression. Required for neural development including neural patterning and cell fate determination. During GZMA-mediated cell death, works in concert with TREX1. NME1 nicks one strand of DNA and TREX1 removes bases from the free 3' end to enhance DNA damage and prevent DNA end reannealing and rapid repair. The sequence is that of Nucleoside diphosphate kinase A (Nme1) from Mus musculus (Mouse).